Consider the following 858-residue polypeptide: Polyhomeotic-like protein 2 (858 aa).

Disordered regions lie at residues 1-76, 230-307, 337-388, 407-444, 473-493, and 529-561; these read MENE…QYLQ, QQTP…MEGR, PQPS…VALQ, LQCP…PHTP, KEVA…SPHQ, and TDLS…KPPQ. Low complexity-rich tracts occupy residues 10–34 and 230–241; these read TSSS…NSSS and QQTPAAAASGPT. The interval 33 to 53 is interaction with BMI1; sequence SSGGSGRPTGPQISVYSGIPD. Polar residues predominate over residues 265–274; sequence PAQSRNTAQA. Over residues 337–358 the composition is skewed to low complexity; it reads PQPSSKHLQPQFVIQQQPQPQQ. Positions 379–388 are enriched in polar residues; that stretch reads ASVSPSVALQ. Residues 473–483 are compositionally biased toward basic and acidic residues; sequence KEVAPGEKSVP. Positions 537-551 are enriched in low complexity; sequence TSGNGNSASSIAGTA. An HD1 motif is present at residues 558–587; the sequence is KPPQAIVKPQILTHVIEGFVIQEGAEPFPV. Glycyl lysine isopeptide (Lys-Gly) (interchain with G-Cter in SUMO2) cross-links involve residues Lys598 and Lys600. The residue at position 619 (Thr619) is a Phosphothreonine. A Phosphoserine modification is found at Ser621. Lys632 participates in a covalent cross-link: Glycyl lysine isopeptide (Lys-Gly) (interchain with G-Cter in SUMO2). The segment at 633–667 adopts an FCS-type zinc-finger fold; that stretch reads EEGAPLKLKCELCGRVDFAYKFKRSKRFCSMACAK. Residues Cys642, Cys645, Cys661, and Cys665 each coordinate Zn(2+). 2 disordered regions span residues 688–720 and 732–768; these read QKAG…TGTV and HSQE…GQRD. Residue Lys702 forms a Glycyl lysine isopeptide (Lys-Gly) (interchain with G-Cter in SUMO2) linkage. Ser751 is subject to Phosphoserine. An SAM domain is found at 794–858; the sequence is WNVEDVYEFI…YARISMLKDS (65 aa). Residue Lys847 forms a Glycyl lysine isopeptide (Lys-Gly) (interchain with G-Cter in SUMO2) linkage.

In terms of assembly, component of a PRC1-like complex. Interacts with CBX4. Interacts with BMI1, PCGF2, PHC1 and RNF2. Interacts with CHTOP. Interacts with the N-terminal region of the SP1 transcription factor and with MAPKAPK2. Interacts with SAMD7 and SAMD11.

It is found in the nucleus. Component of a Polycomb group (PcG) multiprotein PRC1-like complex, a complex class required to maintain the transcriptionally repressive state of many genes, including Hox genes, throughout development. PcG PRC1 complex acts via chromatin remodeling and modification of histones; it mediates monoubiquitination of histone H2A 'Lys-119', rendering chromatin heritably changed in its expressibility. The sequence is that of Polyhomeotic-like protein 2 (PHC2) from Homo sapiens (Human).